We begin with the raw amino-acid sequence, 104 residues long: MAVIADPETAQGFRLAGLEGYGASSAEEAQSLLETLVERGGYALVAVDEALLPDPERAVERLMRGRDLPVLLPIAGLKEAFQGHDVEGYMRELVRKTIGFDIKL.

This sequence belongs to the V-ATPase F subunit family.

Produces ATP from ADP in the presence of a proton gradient across the membrane. This is V-type ATP synthase subunit F (atpF) from Thermus thermophilus (strain ATCC 27634 / DSM 579 / HB8).